The primary structure comprises 206 residues: Transmembrane emp24 domain-containing protein bai (206 aa).

The first 20 residues, 1 to 20, serve as a signal peptide directing secretion; it reads MLKSLLCILLIFGCLCRIHG. Residues 21–172 lie on the Lumenal side of the membrane; the sequence is VMFHLTPNTQ…RDTNEKTNSR (152 aa). The GOLD domain maps to 30–140; the sequence is QKCLKEDIQA…LKPLEVDLKR (111 aa). Residues 173-193 form a helical membrane-spanning segment; it reads VLFFSIFSMCCLLGLATWQVL. Over 194–206 the chain is Cytoplasmic; the sequence is YLRRYFKAKKLIE.

This sequence belongs to the EMP24/GP25L family.

Its subcellular location is the membrane. Eca and bai are essential, though not redundant, for dorsoventral patterning of the embryo. Specifically required during early embryogenesis for the activity of maternal tkv, while the zygotic tkv is not affected. This is Transmembrane emp24 domain-containing protein bai from Drosophila grimshawi (Hawaiian fruit fly).